The following is a 550-amino-acid chain: Pectinesterase 2.2 (550 aa).

A glycan (N-linked (GlcNAc...) asparagine) is linked at Asn-179. Residues Thr-312 and Gln-342 each contribute to the substrate site. The cysteines at positions 331 and 358 are disulfide-linked. The Proton donor role is filled by Asp-365. The Nucleophile role is filled by Asp-386. An intrachain disulfide couples Cys-399 to Cys-433. Residues Arg-454 and Trp-456 each coordinate substrate.

It in the N-terminal section; belongs to the PMEI family. This sequence in the C-terminal section; belongs to the pectinesterase family.

Its subcellular location is the secreted. It localises to the cell wall. The enzyme catalyses [(1-&gt;4)-alpha-D-galacturonosyl methyl ester](n) + n H2O = [(1-&gt;4)-alpha-D-galacturonosyl](n) + n methanol + n H(+). It participates in glycan metabolism; pectin degradation; 2-dehydro-3-deoxy-D-gluconate from pectin: step 1/5. Its function is as follows. Pectinesterase may play a role in cell wall metabolism during fruit growth and development prior to ripening and may be required for preparing cell walls for softening by polygalacturonase during fruit ripening. The chain is Pectinesterase 2.2 (PME2.2) from Solanum lycopersicum (Tomato).